The following is a 196-amino-acid chain: 3-isopropylmalate dehydratase small subunit (196 aa).

This sequence belongs to the LeuD family. LeuD type 1 subfamily. In terms of assembly, heterodimer of LeuC and LeuD.

The enzyme catalyses (2R,3S)-3-isopropylmalate = (2S)-2-isopropylmalate. Its pathway is amino-acid biosynthesis; L-leucine biosynthesis; L-leucine from 3-methyl-2-oxobutanoate: step 2/4. In terms of biological role, catalyzes the isomerization between 2-isopropylmalate and 3-isopropylmalate, via the formation of 2-isopropylmaleate. The sequence is that of 3-isopropylmalate dehydratase small subunit from Streptococcus sanguinis (strain SK36).